Consider the following 56-residue polypeptide: Small ribosomal subunit protein uS14 (56 aa).

Zn(2+) is bound by residues cysteine 21, cysteine 24, cysteine 39, and cysteine 42.

The protein belongs to the universal ribosomal protein uS14 family. Zn(2+) is required as a cofactor.

The chain is Small ribosomal subunit protein uS14 (RPS29) from Triticum aestivum (Wheat).